Reading from the N-terminus, the 722-residue chain is Golgin subfamily A member 5 (722 aa).

Topologically, residues 1 to 689 are cytoplasmic; the sequence is MSWFTDLAGR…IFLRRYPIAR (689 aa). 2 disordered regions span residues 90-158 and 194-215; these read TRSS…VKPI and TLSD…SHEL. A compositionally biased stretch (low complexity) spans 91 to 109; sequence RSSIESSHNSSVNVSSHRS. Residues 134–148 show a composition bias toward basic and acidic residues; the sequence is DKVHSSSQKETRKES. Residues 149-158 are compositionally biased toward polar residues; it reads ASVNQAVKPI. Low complexity predominate over residues 195-209; that stretch reads LSDSGSSASLSTTGD. Residues 211–622 adopt a coiled-coil conformation; the sequence is KSHELSNLRL…LEHQLKNVQG (412 aa). The chain crosses the membrane as a helical; Anchor for type IV membrane protein span at residues 690-710; it reads VFIIIYMALLHLWVMIVLLTY. Over 711 to 722 the chain is Lumenal; the sequence is TPEMHHDTPSGK.

It localises to the golgi apparatus membrane. In terms of biological role, involved in maintaining Golgi structure. Stimulates the formation of Golgi stacks and ribbons. Involved in intra-Golgi retrograde transport. The protein is Golgin subfamily A member 5 (golga5) of Xenopus laevis (African clawed frog).